The chain runs to 428 residues: Glutamate-1-semialdehyde 2,1-aminomutase (428 aa).

Lys267 carries the post-translational modification N6-(pyridoxal phosphate)lysine.

The protein belongs to the class-III pyridoxal-phosphate-dependent aminotransferase family. HemL subfamily. In terms of assembly, homodimer. The cofactor is pyridoxal 5'-phosphate.

Its subcellular location is the cytoplasm. It carries out the reaction (S)-4-amino-5-oxopentanoate = 5-aminolevulinate. Its pathway is porphyrin-containing compound metabolism; protoporphyrin-IX biosynthesis; 5-aminolevulinate from L-glutamyl-tRNA(Glu): step 2/2. In Sulfurihydrogenibium sp. (strain YO3AOP1), this protein is Glutamate-1-semialdehyde 2,1-aminomutase.